An 82-amino-acid polypeptide reads, in one-letter code: MDSIISAASVIAAGLAIGLAAIGPGIGQGNAAGQAVEGIARQPEGENKIRGTLLLSLAFMEALTIYGLVVALALLFANPFNG.

Transmembrane regions (helical) follow at residues 4-24 (IISA…AIGP) and 57-77 (LAFM…LLFA).

This sequence belongs to the ATPase C chain family. In terms of assembly, F-type ATPases have 2 components, F(1) - the catalytic core - and F(0) - the membrane proton channel. F(1) has five subunits: alpha(3), beta(3), gamma(1), delta(1), epsilon(1). F(0) has four main subunits: a(1), b(1), b'(1) and c(10-14). The alpha and beta chains form an alternating ring which encloses part of the gamma chain. F(1) is attached to F(0) by a central stalk formed by the gamma and epsilon chains, while a peripheral stalk is formed by the delta, b and b' chains.

It localises to the plastid. It is found in the chloroplast thylakoid membrane. Functionally, f(1)F(0) ATP synthase produces ATP from ADP in the presence of a proton or sodium gradient. F-type ATPases consist of two structural domains, F(1) containing the extramembraneous catalytic core and F(0) containing the membrane proton channel, linked together by a central stalk and a peripheral stalk. During catalysis, ATP synthesis in the catalytic domain of F(1) is coupled via a rotary mechanism of the central stalk subunits to proton translocation. Its function is as follows. Key component of the F(0) channel; it plays a direct role in translocation across the membrane. A homomeric c-ring of between 10-14 subunits forms the central stalk rotor element with the F(1) delta and epsilon subunits. The sequence is that of ATP synthase subunit c, chloroplastic from Trieres chinensis (Marine centric diatom).